Reading from the N-terminus, the 137-residue chain is Large ribosomal subunit protein uL16 (137 aa).

This sequence belongs to the universal ribosomal protein uL16 family. In terms of assembly, part of the 50S ribosomal subunit.

Its function is as follows. Binds 23S rRNA and is also seen to make contacts with the A and possibly P site tRNAs. This chain is Large ribosomal subunit protein uL16, found in Pseudomonas syringae pv. tomato (strain ATCC BAA-871 / DC3000).